The chain runs to 258 residues: Tryptophan synthase alpha chain (258 aa).

Residues glutamate 52 and aspartate 63 each act as proton acceptor in the active site.

Belongs to the TrpA family. Tetramer of two alpha and two beta chains.

The catalysed reaction is (1S,2R)-1-C-(indol-3-yl)glycerol 3-phosphate + L-serine = D-glyceraldehyde 3-phosphate + L-tryptophan + H2O. Its pathway is amino-acid biosynthesis; L-tryptophan biosynthesis; L-tryptophan from chorismate: step 5/5. Its function is as follows. The alpha subunit is responsible for the aldol cleavage of indoleglycerol phosphate to indole and glyceraldehyde 3-phosphate. This chain is Tryptophan synthase alpha chain, found in Streptococcus pneumoniae (strain 70585).